The sequence spans 206 residues: Elongation factor 1-beta (206 aa).

A2 carries the post-translational modification N-acetylalanine. K13 is covalently cross-linked (Glycyl lysine isopeptide (Lys-Gly) (interchain with G-Cter in ubiquitin)). Phosphoserine is present on residues S31 and S86.

It belongs to the EF-1-beta/EF-1-delta family. In terms of assembly, the eukaryotic elongation factor 1 complex (eEF1) is probably a heterohexamer. Two trimeric complexes, each composed of eEF1A (TEF1 or TEF2), eEF1Balpha (EFB1) and eEF1Bgamma (CAM1 or TEF4), are probably dimerized via the eF1Bgamma subunits. eEF1Balpha interacts directly with eEF1A. eEF1Balpha and eEF1Bgamma form the eEF1B subcomplex with the GEF activity. Post-translationally, S-thiolated in response to oxidative stress, probably inhibiting the protein and causing a reduction in protein synthesis.

Its pathway is protein biosynthesis; polypeptide chain elongation. Functionally, catalytic subunit of the guanine nucleotide exchange factor (GEF) (eEF1B subcomplex) of the eukaryotic elongation factor 1 complex (eEF1). Stimulates the exchange of GDP for GTP on elongation factor 1A (eEF1A), probably by displacing GDP from the nucleotide binding pocket in eEF1A. The 30-fold higher concentration of GTP compared to GDP in cells favors the formation of eEF1A-GTP, which rapidly forms a ternary complex with aminoacyl-tRNA that in turn displaces eEF1B from the complex. The chain is Elongation factor 1-beta (EFB1) from Saccharomyces cerevisiae (strain ATCC 204508 / S288c) (Baker's yeast).